A 268-amino-acid chain; its full sequence is Proenkephalin-A (268 aa).

The N-terminal stretch at 1–24 (MARLLRLCTWLVALGPGLLATVQA) is a signal peptide. Cystine bridges form between cysteine 26–cysteine 48, cysteine 30–cysteine 52, and cysteine 33–cysteine 65. The disordered stretch occupies residues 163 to 184 (TGDDRDRENHHQEGGDSDEGVS). The span at 164–176 (GDDRDRENHHQEG) shows a compositional bias: basic and acidic residues. 2 propeptides span residues 197–208 (SPQVEDEAKELQ) and 218–228 (VGRPEWWMDYQ). Residue serine 252 is modified to Phosphoserine.

The protein belongs to the opioid neuropeptide precursor family. Proenkephalin-A is cleaved by CTSL to generate Met-enkephalin. Post-translationally, processed and degraded by ACE. In terms of processing, probably cleaved by ACE. Processed by ACE to generate Met-enkephalin in the nucleus accumbens of the brain. Post-translationally, the N-terminal domain contains 6 conserved cysteines thought to be involved in disulfide bonding and/or processing.

It is found in the cytoplasmic vesicle. The protein localises to the secretory vesicle. The protein resides in the chromaffin granule lumen. Its subcellular location is the secreted. In terms of biological role, neuropeptide that competes with and mimic the effects of opiate drugs. They play a role in a number of physiologic functions, including pain perception and responses to stress. Met-enkephalin-Arg-Phe neuropeptide acts as a strong ligand of Mu-type opioid receptor OPRM1. Met-enkephalin-Arg-Phe-binding to OPRM1 in the nucleus accumbens of the brain increases activation of OPRM1, leading to long-term synaptic depression of glutamate release. Functionally, increases glutamate release in the striatum and decreases GABA concentration in the striatum. Its function is as follows. Increases glutamate release in the striatum. This Cavia porcellus (Guinea pig) protein is Proenkephalin-A (PENK).